Consider the following 538-residue polypeptide: MNSTAANVKPEPGLYGPDAAASPAIARYLIQGPSPLSIGLVVLIGAISSFLLQQFLKPAVNPLSPKFTSNTWPWLGSLGMMIGHWTFWKSCIKESKTGQFSFWLGRTHVVGLSGPDARKMFFEHPALDLHKATDLTPLGVNFWPIHAIFTPRDEKFQKSTYWLRTLTHLMKTPNMERCLPGVIQDARTGLEALKRDTPSGIINTPKVWPVVFKQTARVFMADDVTDDPKLWATTLGAIDTILHTFSPFNTLLPWIPEPSMIRRRMARRALLRVSRGIVRDRHASPKSASKNDAVQSLINLGDPDDNISEFMINAAFVGVVNAHVIFPQLLNALAVHLDWQDKVYKEVTEVADQHCKEQCLPLVDKLFHIPLSAWENSFPNAALMMEEISRIWTCFPTARFNTLYESIPIPGTSEVIPARTHAIYNSTEIHFNPKLYDRPASFRPDRFAPESQKTWDKEPHGLNTWGTGQRLCSGMRWAKLQQNILMAVALSLYRLEKCDKDGKPDPSAYEKQQAMDGDLDEEVAFVLPECFVKLIPRE.

The helical transmembrane segment at 36–56 (LSIGLVVLIGAISSFLLQQFL) threads the bilayer. Asn-306 and Asn-425 each carry an N-linked (GlcNAc...) asparagine glycan. Cys-472 lines the heme pocket.

Belongs to the cytochrome P450 family. It depends on heme as a cofactor.

It is found in the membrane. The enzyme catalyses 2 nataloe emodin + reduced [NADPH--hemoprotein reductase] + O2 = cladofulvin + oxidized [NADPH--hemoprotein reductase] + 2 H2O + H(+). The protein operates within pigment biosynthesis. Its function is as follows. Cytochrome P450 monooxygenase; part of the gene cluster that mediates the biosynthesis of the bianthraquinone cladofulvin, a conidial pigment not required for virulence but that plays a role in fitness and resistance to environmental stresses including UV light and low-temperature stress. The pathway begins with the synthesis of atrochrysone thioester by the polyketide synthase (PKS) claG. The atrochrysone carboxyl ACP thioesterase claF then breaks the thioester bond and releases the atrochrysone carboxylic acid from claG. This compound is decarboxylated by claH to yield emodin, which is further converted to chrysophanol hydroquinone by the reductase claC and the dehydratase claB. The cytochrome monooxygenase P450 claM then catalyzes the dimerization of nataloe-emodin to cladofulvin. This is Cytochrome P450 monooxygenase claM from Passalora fulva (Tomato leaf mold).